A 545-amino-acid chain; its full sequence is E3 ubiquitin-protein ligase ipaH9.8 (545 aa).

An interaction with target proteins region spans residues 1 to 242 (MLPINNNFSL…YHGPRIYFSM (242 aa)). LRR repeat units lie at residues 57–77 (NSDE…NLPA), 78–99 (QITL…PVTL), 100–117 (KKLY…VLPP), 118–139 (ALES…PDSL), 140–157 (LTMN…SLPQ), 158–179 (ALKN…SEGN), 182–203 (VVRE…ILNL), and 205–228 (NECS…QRLT). Residues 243-250 (SDGQQNTL) form a linker region. The segment at 251–545 (HRPLADAVTA…SENGSQLHHS (295 aa)) is E3 ubiquitin-protein ligase catalytic domain. The NEL domain maps to 253–545 (PLADAVTAWF…SENGSQLHHS (293 aa)). Catalysis depends on Cys-337, which acts as the Glycyl thioester intermediate.

It belongs to the LRR-containing bacterial E3 ligase family. As to quaternary structure, also interacts with human and mouse U2AF1 (U2AF35). Ubiquitinated in the presence of host E1 ubiquitin-activating enzyme, E2 ubiquitin-conjugating enzyme and ubiquitin.

Its subcellular location is the secreted. The protein resides in the host cytoplasm. It localises to the host nucleus. It catalyses the reaction S-ubiquitinyl-[E2 ubiquitin-conjugating enzyme]-L-cysteine + [acceptor protein]-L-lysine = [E2 ubiquitin-conjugating enzyme]-L-cysteine + N(6)-ubiquitinyl-[acceptor protein]-L-lysine.. Exists in an autoinhibited state in the absence of substrate protein, due to interactions of the leucine-rich repeats with NEL domain. Is activated upon binding to a substrate protein. Effector E3 ubiquitin ligase that interferes with host's ubiquitination pathway and modulates the acute inflammatory responses, thus facilitating bacterial colonization within the host cell. Interacts with IKBKG (NEMO) and TNIP1 (ABIN-1), a ubiquitin-binding adapter protein, which results in TNIP1-dependent 'Lys-27'-linked polyubiquitination of IKBKG. Consequently, polyubiquitinated IKBKG undergoes proteasome-dependent degradation, which perturbs NF-kappa-B activation during bacterial infection. Mediates polyubiquitination of host U2AF1, leading to its proteasomal degradation. Catalyzes 'Lys-48'-linked polyubiquitination and subsequent degradation of a subset of host guanylate-binding proteins (GBP1, GBP2, GBP4 and GBP6), thereby suppressing host cell defense. In contrast, host GBP3 and GBP7 are not ubiquitinated by IpaH9.8. Uses UBE2D2 (UBCH5B) as an E2 ubiquitin-conjugating enzyme. This Shigella sonnei (strain Ss046) protein is E3 ubiquitin-protein ligase ipaH9.8 (ipaH9.8).